Reading from the N-terminus, the 131-residue chain is Profilin (131 aa).

It belongs to the profilin family. In terms of assembly, occurs in many kinds of cells as a complex with monomeric actin in a 1:1 ratio.

It is found in the cytoplasm. Its subcellular location is the cytoskeleton. Binds to actin and affects the structure of the cytoskeleton. At high concentrations, profilin prevents the polymerization of actin, whereas it enhances it at low concentrations. Has a high affinity for poly-proline. This Citrullus lanatus (Watermelon) protein is Profilin.